We begin with the raw amino-acid sequence, 436 residues long: Small ribosomal subunit protein uS5m (436 aa).

The S5 DRBM domain occupies Phe152–Val218. The disordered stretch occupies residues Gly417–Asp436.

The protein belongs to the universal ribosomal protein uS5 family. In terms of assembly, component of the mitochondrial ribosome small subunit (28S) which comprises a 12S rRNA and about 30 distinct proteins.

It localises to the mitochondrion. This Caenorhabditis elegans protein is Small ribosomal subunit protein uS5m (mrps-5).